Consider the following 329-residue polypeptide: Proline/serine-rich coiled-coil protein 1 (329 aa).

Ser-22 carries the post-translational modification Phosphoserine. Copy 1 of the repeat occupies 38 to 41 (PEKP). Ser-47, Ser-65, and Ser-70 each carry phosphoserine. 2 repeat units span residues 68-71 (PLSP) and 103-106 (PGRP). Positions 68–215 (PLSPEKLEEI…ARTVASPPIP (148 aa)) are 5 X 4 AA repeats of P-X-X-P. The stretch at 70–94 (SPEKLEEILDEANRLAAQLEECALK) forms a coiled coil. The disordered stretch occupies residues 94–329 (KDSENAAAGP…RKAAVPGPTR (236 aa)). The span at 114–126 (PRRETFVLKDSPV) shows a compositional bias: basic and acidic residues. Position 124 is a phosphoserine (Ser-124). 2 stretches are compositionally biased toward polar residues: residues 132–148 (TVSS…TGLR) and 175–186 (PTCNLFSASKNP). Thr-145 carries the post-translational modification Phosphothreonine. At Ser-189 the chain carries Phosphoserine. 2 consecutive repeat copies span residues 194–197 (PTLP) and 212–215 (PPIP). Low complexity-rich tracts occupy residues 219–231 (APQS…QCSS) and 302–315 (GAAR…ARGR).

The protein belongs to the PSRC1 family. In terms of assembly, interacts with APC2. Interacts with KIF2A. Interacts with ANKRD53; recruits ANKRD53 to the spindle during mitosis. In terms of processing, phosphorylated during mitosis.

Its subcellular location is the cytoplasm. It localises to the cytoskeleton. The protein localises to the spindle. It is found in the spindle pole. Its function is as follows. Required for normal progression through mitosis. Required for normal congress of chromosomes at the metaphase plate, and for normal rate of chromosomal segregation during anaphase. Plays a role in the regulation of mitotic spindle dynamics. Increases the rate of turnover of microtubules on metaphase spindles, and contributes to the generation of normal tension across sister kinetochores. Recruits KIF2A and ANKRD53 to the mitotic spindle and spindle poles. May participate in p53/TP53-regulated growth suppression. The sequence is that of Proline/serine-rich coiled-coil protein 1 (Psrc1) from Rattus norvegicus (Rat).